Reading from the N-terminus, the 143-residue chain is Beta/delta-urticatoxin-Uf2b (143 aa).

The N-terminal stretch at 1-18 (MGAIVLVALMALVASSSA) is a signal peptide. A propeptide spanning residues 19-80 (FSDIEHNIMK…MMLSGRPQPN (62 aa)) is cleaved from the precursor. 6 disulfides stabilise this stretch: Cys-83–Cys-100, Cys-90–Cys-105, Cys-99–Cys-113, Cys-115–Cys-129, Cys-122–Cys-134, and Cys-128–Cys-142.

This sequence belongs to the urticatoxin-2 family. As to expression, expressed in trichomes, that are stiff epidermal hairs located on the surface of petioles and leaves.

Its subcellular location is the secreted. Plant defense neurotoxin that causes pain and systemic symptoms in mammals via modulation of voltage-gated sodium channels (Nav). Potent modulator of human Nav1.5/SCN5A (EC(50)=55 nM), Nav1.6/SCN8A (EC(50)=0.86 nM), and Nav1.7/SCN9A (EC(50)=208 nM), where it shifts the activation threshold to more negative potentials and delays fast inactivation. Also shifts the voltage-dependence of steady-state fast inactivation of Nav1.6/SCN8A, but not that of Nav1.5/SCN5A or Nav1.7/SCN9A. On Nav1.7/SCN9A, principally acts by binding to extracellular loops of domain IV (Nav site 3). In vivo, intraplantar injection into mice causes numerous dose-dependent, immediate, and long-lasting spontaneous pain behaviors, while no swelling is observed in the injected paw. At the highest doses tested, systemic symptoms including hypokinesia and hypersalivation are observed. The chain is Beta/delta-urticatoxin-Uf2b from Urtica ferox (Tree nettle).